The primary structure comprises 415 residues: Gamma-glutamyl phosphate reductase (415 aa).

It belongs to the gamma-glutamyl phosphate reductase family.

The protein resides in the cytoplasm. The catalysed reaction is L-glutamate 5-semialdehyde + phosphate + NADP(+) = L-glutamyl 5-phosphate + NADPH + H(+). It functions in the pathway amino-acid biosynthesis; L-proline biosynthesis; L-glutamate 5-semialdehyde from L-glutamate: step 2/2. In terms of biological role, catalyzes the NADPH-dependent reduction of L-glutamate 5-phosphate into L-glutamate 5-semialdehyde and phosphate. The product spontaneously undergoes cyclization to form 1-pyrroline-5-carboxylate. This chain is Gamma-glutamyl phosphate reductase, found in Thermotoga maritima (strain ATCC 43589 / DSM 3109 / JCM 10099 / NBRC 100826 / MSB8).